A 323-amino-acid polypeptide reads, in one-letter code: Methionyl-tRNA formyltransferase (323 aa).

115–118 (SLLP) lines the (6S)-5,6,7,8-tetrahydrofolate pocket.

It belongs to the Fmt family.

It carries out the reaction L-methionyl-tRNA(fMet) + (6R)-10-formyltetrahydrofolate = N-formyl-L-methionyl-tRNA(fMet) + (6S)-5,6,7,8-tetrahydrofolate + H(+). Functionally, attaches a formyl group to the free amino group of methionyl-tRNA(fMet). The formyl group appears to play a dual role in the initiator identity of N-formylmethionyl-tRNA by promoting its recognition by IF2 and preventing the misappropriation of this tRNA by the elongation apparatus. The protein is Methionyl-tRNA formyltransferase of Lactococcus lactis subsp. cremoris (strain MG1363).